The following is a 331-amino-acid chain: Ketol-acid reductoisomerase (NADP(+)) (331 aa).

Residues 2–182 (AKIYTDKDAS…GATRAGVIET (181 aa)) enclose the KARI N-terminal Rossmann domain. NADP(+)-binding positions include 25–28 (YGIQ), arginine 48, serine 53, and 83–86 (DMEQ). Histidine 108 is an active-site residue. Residue glycine 134 participates in NADP(+) binding. In terms of domain architecture, KARI C-terminal knotted spans 183–328 (TFAEETETDL…AEMRKLLFGR (146 aa)). Mg(2+)-binding residues include aspartate 191, glutamate 195, glutamate 227, and glutamate 231. Substrate is bound at residue serine 252.

Belongs to the ketol-acid reductoisomerase family. It depends on Mg(2+) as a cofactor.

It carries out the reaction (2R)-2,3-dihydroxy-3-methylbutanoate + NADP(+) = (2S)-2-acetolactate + NADPH + H(+). It catalyses the reaction (2R,3R)-2,3-dihydroxy-3-methylpentanoate + NADP(+) = (S)-2-ethyl-2-hydroxy-3-oxobutanoate + NADPH + H(+). Its pathway is amino-acid biosynthesis; L-isoleucine biosynthesis; L-isoleucine from 2-oxobutanoate: step 2/4. It participates in amino-acid biosynthesis; L-valine biosynthesis; L-valine from pyruvate: step 2/4. Functionally, involved in the biosynthesis of branched-chain amino acids (BCAA). Catalyzes an alkyl-migration followed by a ketol-acid reduction of (S)-2-acetolactate (S2AL) to yield (R)-2,3-dihydroxy-isovalerate. In the isomerase reaction, S2AL is rearranged via a Mg-dependent methyl migration to produce 3-hydroxy-3-methyl-2-ketobutyrate (HMKB). In the reductase reaction, this 2-ketoacid undergoes a metal-dependent reduction by NADPH to yield (R)-2,3-dihydroxy-isovalerate. The chain is Ketol-acid reductoisomerase (NADP(+)) from Pyrobaculum islandicum (strain DSM 4184 / JCM 9189 / GEO3).